Here is a 55-residue protein sequence, read N- to C-terminus: Large ribosomal subunit protein bL33 (55 aa).

The protein belongs to the bacterial ribosomal protein bL33 family.

The protein is Large ribosomal subunit protein bL33 of Hyphomonas neptunium (strain ATCC 15444).